Reading from the N-terminus, the 90-residue chain is Small ribosomal subunit protein uS15c (90 aa).

Belongs to the universal ribosomal protein uS15 family. In terms of assembly, part of the 30S ribosomal subunit.

The protein localises to the plastid. The protein resides in the chloroplast. The protein is Small ribosomal subunit protein uS15c (rps15) of Drimys granadensis.